We begin with the raw amino-acid sequence, 441 residues long: Ribulose bisphosphate carboxylase large chain (441 aa).

The substrate site is built by asparagine 89 and threonine 139. Lysine 141 acts as the Proton acceptor in catalysis. Lysine 143 contacts substrate. Positions 167, 169, and 170 each coordinate Mg(2+). Lysine 167 carries the N6-carboxylysine modification. The active-site Proton acceptor is histidine 260. Positions 261, 293, and 345 each coordinate substrate.

This sequence belongs to the RuBisCO large chain family. Type I subfamily. As to quaternary structure, heterohexadecamer of 8 large chains and 8 small chains; disulfide-linked. The disulfide link is formed within the large subunit homodimers. Requires Mg(2+) as cofactor. The disulfide bond which can form in the large chain dimeric partners within the hexadecamer appears to be associated with oxidative stress and protein turnover.

It is found in the plastid. Its subcellular location is the chloroplast. The enzyme catalyses 2 (2R)-3-phosphoglycerate + 2 H(+) = D-ribulose 1,5-bisphosphate + CO2 + H2O. It carries out the reaction D-ribulose 1,5-bisphosphate + O2 = 2-phosphoglycolate + (2R)-3-phosphoglycerate + 2 H(+). In terms of biological role, ruBisCO catalyzes two reactions: the carboxylation of D-ribulose 1,5-bisphosphate, the primary event in carbon dioxide fixation, as well as the oxidative fragmentation of the pentose substrate in the photorespiration process. Both reactions occur simultaneously and in competition at the same active site. The sequence is that of Ribulose bisphosphate carboxylase large chain from Coriandrum sativum (Coriander).